Consider the following 781-residue polypeptide: MVSIDKYEIFLDFDFKNLIYKGYEKIYLSTDNEVVLDSVGLNIVSVKTEGKSVPFKISDSQIFIQTGKFDGVLEIEFEGKVKERGLVGIYKAPYDHSYIITTQFESVHAREFIPCIDHPAFKARFKLSVKVDKDLDVISNMPIEDVREEGDKKIVTFQETPRMSTYLLYLGIGKFEEIKDKLGEVDIIVATVPGRISKGKFALDVAKKVIEYYEDYFGIKYQLPKEHLIAIPEFAFGAMENWGAITFRETALLADESSSVQQKMRVASVVAHELAHQWFGDLVTMKWWDDLWLNESFATFMSHKAIAELYKEWDFWGTFINSETSGALFRDSLTTTHPIEAHVTSPEEIEQLFDDISYGKGASILRMIEAYLGDEDFRKGIQIYLNTYKYSNATGSDFWNSLEKGSGKPVSEIVKDWITKDGYPVVYVSVNGSKINLEQERFYLKGNGKNAVYKVPLTLEVNGRKITYLLEKEKDSIDIGSDIKSIKVNIDRTGFYRVYYNDLSLVFNSKLSHLDKWGLFNDYFNFFLAGRVNYTTYESIAKQFMKDDNYLVVDELVSELYYLWRVNRDKYKLLYEVLPYQVKRFSKRKDELSRRTYSYLLSTFAFVDEKFASGLAVAFEKYDTLDPNVKEAVAIAYAVTYGEDAYDELLNKYRSEKFDEEKTRLLYGLLSFREPYLVVNTMSLALTGEIKRQDVARILPYASYNPYSRLALWKWLKTHMEFLRSIYAGTAILGRTLRSVIPFLGLNNAEVVEYFTTNRFPEMEVEIKSGLEILDSLRRII.

Substrate-binding positions include E105 and 237-241 (GAMEN). Zn(2+) is bound at residue H272. Residue E273 is the Proton acceptor of the active site. H276 and E295 together coordinate Zn(2+).

It belongs to the peptidase M1 family. Zn(2+) serves as cofactor.

It localises to the cytoplasm. The polypeptide is Probable aminopeptidase 2 (ape2) (Sulfurisphaera tokodaii (strain DSM 16993 / JCM 10545 / NBRC 100140 / 7) (Sulfolobus tokodaii)).